A 98-amino-acid chain; its full sequence is Acylphosphatase (98 aa).

One can recognise an Acylphosphatase-like domain in the interval 12 to 98; that stretch reads TYYVRVRGVV…ERRFERFQQQ (87 aa). Residues Arg27 and Asn45 contribute to the active site.

This sequence belongs to the acylphosphatase family.

The enzyme catalyses an acyl phosphate + H2O = a carboxylate + phosphate + H(+). The polypeptide is Acylphosphatase (acyP) (Burkholderia vietnamiensis (strain G4 / LMG 22486) (Burkholderia cepacia (strain R1808))).